The primary structure comprises 580 residues: Glutamyl-tRNA(Gln) amidotransferase subunit B-2, chloroplastic/mitochondrial (580 aa).

Low complexity-rich tracts occupy residues 20–35 (RRDA…ATVS) and 42–59 (AVST…SAAV). Positions 20–64 (RRDATAAASTSAATVSRGRRARAVSTTTTTSSSSSSSAAVDARDA) are disordered.

Belongs to the GatB/GatE family. GatB subfamily. Subunit of the heterotrimeric GatCAB amidotransferase (AdT) complex, composed of A, B and C subunits.

The protein resides in the mitochondrion. It is found in the plastid. It localises to the chloroplast. The catalysed reaction is L-glutamyl-tRNA(Gln) + L-glutamine + ATP + H2O = L-glutaminyl-tRNA(Gln) + L-glutamate + ADP + phosphate + H(+). In terms of biological role, allows the formation of correctly charged Gln-tRNA(Gln) through the transamidation of misacylated Glu-tRNA(Gln) in chloroplasts and mitochondria. The reaction takes place in the presence of glutamine and ATP through an activated gamma-phospho-Glu-tRNA(Gln). The protein is Glutamyl-tRNA(Gln) amidotransferase subunit B-2, chloroplastic/mitochondrial of Micromonas pusilla (strain CCMP1545) (Picoplanktonic green alga).